We begin with the raw amino-acid sequence, 139 residues long: uncharacterized protein (139 aa).

This is an uncharacterized protein from Burkholderia cepacia (Pseudomonas cepacia).